Consider the following 406-residue polypeptide: Renin (406 aa).

An N-terminal signal peptide occupies residues 1-23 (MDGWRRMPRWGLLLLLWGSCTFG). Positions 24 to 66 (LPTDTTTFKRIFLKRMPSIRESLKERGVDMARLGPEWSQPMKR) are cleaved as a propeptide — activation peptide. Residue Asn71 is glycosylated (N-linked (GlcNAc...) asparagine). Residues 86-403 (YYGEIGIGTP…DRRNNRIGFA (318 aa)) form the Peptidase A1 domain. Asp104 is a catalytic residue. Cys117 and Cys124 are oxidised to a cystine. Asn141 carries N-linked (GlcNAc...) asparagine glycosylation. A disulfide bridge links Cys283 with Cys287. Asp292 is a catalytic residue. Cys325 and Cys362 are disulfide-bonded.

It belongs to the peptidase A1 family. In terms of assembly, interacts with ATP6AP2.

The protein localises to the secreted. The protein resides in the membrane. The catalysed reaction is Cleavage of Leu-|-Xaa bond in angiotensinogen to generate angiotensin I.. With respect to regulation, interaction with ATP6AP2 results in a 5-fold increased efficiency in angiotensinogen processing. Functionally, renin is a highly specific endopeptidase, whose only known function is to generate angiotensin I from angiotensinogen in the plasma, initiating a cascade of reactions that produce an elevation of blood pressure and increased sodium retention by the kidney. In Macaca mulatta (Rhesus macaque), this protein is Renin (REN).